The following is a 645-amino-acid chain: 1-deoxy-D-xylulose-5-phosphate synthase (645 aa).

Residues histidine 87 and 128-130 (GHS) each bind thiamine diphosphate. Position 159 (aspartate 159) interacts with Mg(2+). Residues 160-161 (GA), asparagine 188, phenylalanine 295, and glutamate 384 each bind thiamine diphosphate. A Mg(2+)-binding site is contributed by asparagine 188.

It belongs to the transketolase family. DXPS subfamily. Homodimer. Mg(2+) is required as a cofactor. Requires thiamine diphosphate as cofactor.

It catalyses the reaction D-glyceraldehyde 3-phosphate + pyruvate + H(+) = 1-deoxy-D-xylulose 5-phosphate + CO2. Its pathway is metabolic intermediate biosynthesis; 1-deoxy-D-xylulose 5-phosphate biosynthesis; 1-deoxy-D-xylulose 5-phosphate from D-glyceraldehyde 3-phosphate and pyruvate: step 1/1. Its function is as follows. Catalyzes the acyloin condensation reaction between C atoms 2 and 3 of pyruvate and glyceraldehyde 3-phosphate to yield 1-deoxy-D-xylulose-5-phosphate (DXP). The polypeptide is 1-deoxy-D-xylulose-5-phosphate synthase (Alcanivorax borkumensis (strain ATCC 700651 / DSM 11573 / NCIMB 13689 / SK2)).